The chain runs to 381 residues: Gustatory and pheromone receptor 39a, isoform C (381 aa).

Topologically, residues 1–37 (MDFQPGELCAYYRLCRYLGIFCIDYNPTKKKFRLRRS) are cytoplasmic. The helical transmembrane segment at 38 to 58 (VLCYIVHFALQAYLVGCISVM) threads the bilayer. The Extracellular portion of the chain corresponds to 59-79 (VTYWRRCFKSELTTTGNHFDR). The helical transmembrane segment at 80–100 (LVMVIALGILVVQNAWLIWLQ) threads the bilayer. At 101 to 129 (APHLRIVRQIEFYRRNHLANVRLLLPKRL) the chain is on the cytoplasmic side. The chain crosses the membrane as a helical span at residues 130-150 (LWLIIATNVVYMANFIKTCIF). At 151 to 171 (EWLTDASRLFVITSLGFPLRY) the chain is on the extracellular side. A helical transmembrane segment spans residues 172 to 192 (LVTSFTMGTYFCMVHIVRLVL). Residues 193–239 (DWNQSQINAIIDESADLKMTSPNRLRLRVCLEMHDRLMLLCNDEISL) lie on the Cytoplasmic side of the membrane. A helical membrane pass occupies residues 240 to 260 (VYGFIAWLSWMFASLDVTGVI). Residues 261–271 (YLTMVIQTKKS) lie on the Extracellular side of the membrane. A helical transmembrane segment spans residues 272 to 292 (IVLKLITNVVWLSPTFMTCAA). Over 293–350 (SFMSNRVTIQANKTAKMLTKVPRTGTGLDRMIEKFLLKNLRQKPILTAYGFFALDKST) the chain is Cytoplasmic. A helical membrane pass occupies residues 351 to 371 (LFKLFTAIFTYMVILVQFKEM). The Extracellular segment spans residues 372–381 (ENSTKSINKF). An N-linked (GlcNAc...) asparagine glycan is attached at asparagine 373.

Belongs to the insect chemoreceptor superfamily. Gustatory receptor (GR) family. Gr21a subfamily. As to expression, expressed in the adult labellar chemosensory neurons. In larvae, is expressed in neurons of the terminal external chemosensory organ, as well as in the dorsal pharyngeal sense organ.

It is found in the cell membrane. Functionally, gustatory receptor which mediates acceptance or avoidance behavior, depending on its substrates. Plays a role in sustaining courtship behavior in males, possibly through the reception of a stimulating arrestant pheromone. The sequence is that of Gustatory and pheromone receptor 39a, isoform C (Gr39a) from Drosophila melanogaster (Fruit fly).